A 305-amino-acid chain; its full sequence is Tyrosine recombinase XerC (305 aa).

The 92-residue stretch at 4–95 folds into the Core-binding (CB) domain; the sequence is ISIQELIKQW…TVKNFYKFLE (92 aa). Residues 116–298 enclose the Tyr recombinase domain; the sequence is LLPKALSVDD…SIKHLEAVYN (183 aa). Residues R159, K182, H250, R253, and H276 contribute to the active site. The active-site O-(3'-phospho-DNA)-tyrosine intermediate is the Y285.

The protein belongs to the 'phage' integrase family. XerC subfamily. Forms a cyclic heterotetrameric complex composed of two molecules of XerC and two molecules of XerD.

The protein localises to the cytoplasm. Its function is as follows. Site-specific tyrosine recombinase, which acts by catalyzing the cutting and rejoining of the recombining DNA molecules. The XerC-XerD complex is essential to convert dimers of the bacterial chromosome into monomers to permit their segregation at cell division. It also contributes to the segregational stability of plasmids. The sequence is that of Tyrosine recombinase XerC from Rickettsia typhi (strain ATCC VR-144 / Wilmington).